The sequence spans 561 residues: DNA ligase (561 aa).

Glutamate 249 serves as a coordination point for ATP. Lysine 251 serves as the catalytic N6-AMP-lysine intermediate. 6 residues coordinate ATP: arginine 256, arginine 271, glutamate 301, phenylalanine 340, arginine 417, and lysine 423.

This sequence belongs to the ATP-dependent DNA ligase family. The cofactor is Mg(2+).

It carries out the reaction ATP + (deoxyribonucleotide)n-3'-hydroxyl + 5'-phospho-(deoxyribonucleotide)m = (deoxyribonucleotide)n+m + AMP + diphosphate.. Its function is as follows. DNA ligase that seals nicks in double-stranded DNA during DNA replication, DNA recombination and DNA repair. The chain is DNA ligase from Methanothermobacter thermautotrophicus (strain ATCC 29096 / DSM 1053 / JCM 10044 / NBRC 100330 / Delta H) (Methanobacterium thermoautotrophicum).